Reading from the N-terminus, the 66-residue chain is Large ribosomal subunit protein uL29 (66 aa).

This sequence belongs to the universal ribosomal protein uL29 family.

This is Large ribosomal subunit protein uL29 from Fervidobacterium nodosum (strain ATCC 35602 / DSM 5306 / Rt17-B1).